The chain runs to 129 residues: NADPH-dependent 7-cyano-7-deazaguanine reductase (129 aa).

C34 serves as the catalytic Thioimide intermediate. The Proton donor role is filled by D41. Substrate is bound by residues 56–58 and 75–76; these read VEL and HE.

It belongs to the GTP cyclohydrolase I family. QueF type 1 subfamily.

The protein resides in the cytoplasm. The catalysed reaction is 7-aminomethyl-7-carbaguanine + 2 NADP(+) = 7-cyano-7-deazaguanine + 2 NADPH + 3 H(+). The protein operates within tRNA modification; tRNA-queuosine biosynthesis. Functionally, catalyzes the NADPH-dependent reduction of 7-cyano-7-deazaguanine (preQ0) to 7-aminomethyl-7-deazaguanine (preQ1). The chain is NADPH-dependent 7-cyano-7-deazaguanine reductase from Alkalilimnicola ehrlichii (strain ATCC BAA-1101 / DSM 17681 / MLHE-1).